Reading from the N-terminus, the 398-residue chain is Phosphoglycerate kinase (398 aa).

Residues 21-23, Arg36, 59-62, Arg119, and Arg157 each bind substrate; these read DFN and HLGR. ATP is bound by residues Lys208, Gly296, Glu327, and 354 to 357; that span reads GGDS.

Belongs to the phosphoglycerate kinase family. As to quaternary structure, monomer.

It is found in the cytoplasm. It catalyses the reaction (2R)-3-phosphoglycerate + ATP = (2R)-3-phospho-glyceroyl phosphate + ADP. It participates in carbohydrate degradation; glycolysis; pyruvate from D-glyceraldehyde 3-phosphate: step 2/5. The protein is Phosphoglycerate kinase of Streptococcus mutans serotype c (strain ATCC 700610 / UA159).